Consider the following 276-residue polypeptide: Large ribosomal subunit protein uL2 (276 aa).

The segment at 223–276 is disordered; it reads GVAMNPVDHPHGGGEGRGKGHHPTSPWGLPTKGYKTRRGKRPSDKFIVRRRNEA. Basic and acidic residues-rich tracts occupy residues 230–240 and 263–276; these read DHPHGGGEGRG and RPSD…RNEA.

Belongs to the universal ribosomal protein uL2 family. In terms of assembly, part of the 50S ribosomal subunit. Forms a bridge to the 30S subunit in the 70S ribosome.

Its function is as follows. One of the primary rRNA binding proteins. Required for association of the 30S and 50S subunits to form the 70S ribosome, for tRNA binding and peptide bond formation. It has been suggested to have peptidyltransferase activity; this is somewhat controversial. Makes several contacts with the 16S rRNA in the 70S ribosome. The sequence is that of Large ribosomal subunit protein uL2 from Thermotoga petrophila (strain ATCC BAA-488 / DSM 13995 / JCM 10881 / RKU-1).